A 186-amino-acid chain; its full sequence is Myosin light chain 1, skeletal muscle isoform (186 aa).

Met-1 carries the post-translational modification Blocked amino end (Met). A disordered region spans residues 1–26 (MPKAPAKKAEPAPAPAPAPEPAPAPA). A compositionally biased stretch (pro residues) spans 12–26 (APAPAPAPEPAPAPA). EF-hand domains are found at residues 42–77 (DQIE…LGQN) and 119–154 (AGFE…LGEK).

In terms of assembly, myosin is a hexamer of 2 heavy chains and 4 light chains.

This is Myosin light chain 1, skeletal muscle isoform from Chelon ramada (Thin-lipped grey mullet).